The primary structure comprises 346 residues: Sulfate/thiosulfate import ATP-binding protein CysA 1 (346 aa).

Residues 3 to 237 (VKVSGITKQF…PNSPFVFSFI (235 aa)) enclose the ABC transporter domain. 35–42 (GPSGSGKT) is an ATP binding site.

It belongs to the ABC transporter superfamily. Sulfate/tungstate importer (TC 3.A.1.6) family. The complex is composed of two ATP-binding proteins (CysA), two transmembrane proteins (CysT and CysW) and a solute-binding protein (CysP).

It localises to the cell inner membrane. The enzyme catalyses sulfate(out) + ATP + H2O = sulfate(in) + ADP + phosphate + H(+). It carries out the reaction thiosulfate(out) + ATP + H2O = thiosulfate(in) + ADP + phosphate + H(+). Functionally, part of the ABC transporter complex CysAWTP involved in sulfate/thiosulfate import. Responsible for energy coupling to the transport system. The protein is Sulfate/thiosulfate import ATP-binding protein CysA 1 of Agrobacterium fabrum (strain C58 / ATCC 33970) (Agrobacterium tumefaciens (strain C58)).